Consider the following 442-residue polypeptide: D-inositol 3-phosphate glycosyltransferase (442 aa).

His-15 is a 1D-myo-inositol 3-phosphate binding site. Residues 21–22 (QP) and Gly-29 each bind UDP-N-acetyl-alpha-D-glucosamine. 1D-myo-inositol 3-phosphate is bound by residues 26 to 31 (DAGGMN), Lys-84, Tyr-117, Thr-141, and Arg-161. Residues Arg-235, Lys-240, and Gln-299 each contribute to the UDP-N-acetyl-alpha-D-glucosamine site. Mg(2+) is bound by residues Tyr-308, Arg-309, and Ser-311. UDP-N-acetyl-alpha-D-glucosamine contacts are provided by Glu-321 and Glu-329. Thr-335 is a Mg(2+) binding site.

This sequence belongs to the glycosyltransferase group 1 family. MshA subfamily. In terms of assembly, homodimer.

The enzyme catalyses 1D-myo-inositol 3-phosphate + UDP-N-acetyl-alpha-D-glucosamine = 1D-myo-inositol 2-acetamido-2-deoxy-alpha-D-glucopyranoside 3-phosphate + UDP + H(+). In terms of biological role, catalyzes the transfer of a N-acetyl-glucosamine moiety to 1D-myo-inositol 3-phosphate to produce 1D-myo-inositol 2-acetamido-2-deoxy-glucopyranoside 3-phosphate in the mycothiol biosynthesis pathway. The polypeptide is D-inositol 3-phosphate glycosyltransferase (Rhodococcus erythropolis (strain PR4 / NBRC 100887)).